The primary structure comprises 535 residues: Ribonuclease Y (535 aa).

A helical membrane pass occupies residues 4–24; it reads IILLIVSALIGLILGYALISI. Positions 118–141 are disordered; that stretch reads ENLSSKEKVLDSKEQSLTDKSKHI. The 61-residue stretch at 225-285 folds into the KH domain; the sequence is TITSVHLPDD…IRREIARMTL (61 aa). Residues 351 to 444 enclose the HD domain; sequence VLRHSVEVGK…VAAADALSSA (94 aa).

Belongs to the RNase Y family.

The protein resides in the cell membrane. Its function is as follows. Endoribonuclease that initiates mRNA decay. The chain is Ribonuclease Y from Streptococcus pyogenes serotype M18 (strain MGAS8232).